The sequence spans 425 residues: Histidine--tRNA ligase (425 aa).

It belongs to the class-II aminoacyl-tRNA synthetase family. Homodimer.

It is found in the cytoplasm. The enzyme catalyses tRNA(His) + L-histidine + ATP = L-histidyl-tRNA(His) + AMP + diphosphate + H(+). The protein is Histidine--tRNA ligase of Shewanella sp. (strain MR-7).